The primary structure comprises 488 residues: UDP-N-acetylmuramate--L-alanine ligase (488 aa).

126 to 132 (GTHGKTT) serves as a coordination point for ATP.

It belongs to the MurCDEF family.

The protein localises to the cytoplasm. It catalyses the reaction UDP-N-acetyl-alpha-D-muramate + L-alanine + ATP = UDP-N-acetyl-alpha-D-muramoyl-L-alanine + ADP + phosphate + H(+). It participates in cell wall biogenesis; peptidoglycan biosynthesis. In terms of biological role, cell wall formation. The protein is UDP-N-acetylmuramate--L-alanine ligase of Cronobacter sakazakii (strain ATCC BAA-894) (Enterobacter sakazakii).